A 294-amino-acid chain; its full sequence is NAD kinase (294 aa).

Asp-74 (proton acceptor) is an active-site residue. NAD(+) is bound by residues 74-75, 148-149, His-159, Arg-176, Asp-178, 189-194, and Gln-249; these read DG, NE, and TAYSLS.

The protein belongs to the NAD kinase family. The cofactor is a divalent metal cation.

It localises to the cytoplasm. The enzyme catalyses NAD(+) + ATP = ADP + NADP(+) + H(+). Functionally, involved in the regulation of the intracellular balance of NAD and NADP, and is a key enzyme in the biosynthesis of NADP. Catalyzes specifically the phosphorylation on 2'-hydroxyl of the adenosine moiety of NAD to yield NADP. The chain is NAD kinase from Vibrio vulnificus (strain CMCP6).